Consider the following 343-residue polypeptide: tRNA N6-adenosine threonylcarbamoyltransferase (343 aa).

Residues H112 and H116 each contribute to the Fe cation site. Residues 135 to 139 (LVSGG), D168, G181, and N273 each bind substrate. D301 serves as a coordination point for Fe cation.

Belongs to the KAE1 / TsaD family. The cofactor is Fe(2+).

The protein resides in the cytoplasm. It carries out the reaction L-threonylcarbamoyladenylate + adenosine(37) in tRNA = N(6)-L-threonylcarbamoyladenosine(37) in tRNA + AMP + H(+). Its function is as follows. Required for the formation of a threonylcarbamoyl group on adenosine at position 37 (t(6)A37) in tRNAs that read codons beginning with adenine. Is involved in the transfer of the threonylcarbamoyl moiety of threonylcarbamoyl-AMP (TC-AMP) to the N6 group of A37, together with TsaE and TsaB. TsaD likely plays a direct catalytic role in this reaction. This Azoarcus sp. (strain BH72) protein is tRNA N6-adenosine threonylcarbamoyltransferase.